The following is a 407-amino-acid chain: Imidazolonepropionase (407 aa).

Residues histidine 68 and histidine 70 each coordinate Fe(3+). Zn(2+) contacts are provided by histidine 68 and histidine 70. Positions 77, 140, and 173 each coordinate 4-imidazolone-5-propanoate. An N-formimidoyl-L-glutamate-binding site is contributed by tyrosine 140. Fe(3+) is bound at residue histidine 238. Residue histidine 238 coordinates Zn(2+). Glutamine 241 contacts 4-imidazolone-5-propanoate. Position 313 (aspartate 313) interacts with Fe(3+). Zn(2+) is bound at residue aspartate 313. Asparagine 315 and glycine 317 together coordinate N-formimidoyl-L-glutamate. Threonine 318 is a binding site for 4-imidazolone-5-propanoate.

The protein belongs to the metallo-dependent hydrolases superfamily. HutI family. Requires Zn(2+) as cofactor. It depends on Fe(3+) as a cofactor.

Its subcellular location is the cytoplasm. It carries out the reaction 4-imidazolone-5-propanoate + H2O = N-formimidoyl-L-glutamate. Its pathway is amino-acid degradation; L-histidine degradation into L-glutamate; N-formimidoyl-L-glutamate from L-histidine: step 3/3. Catalyzes the hydrolytic cleavage of the carbon-nitrogen bond in imidazolone-5-propanoate to yield N-formimidoyl-L-glutamate. It is the third step in the universal histidine degradation pathway. This chain is Imidazolonepropionase, found in Burkholderia cenocepacia (strain HI2424).